The primary structure comprises 399 residues: MALNLNPVSTPFQCRRLPSFSPRQTPSRRSPKFFMASTLSSSSPKEAESLKKPFSPPREVHVQVTHSMPQEKIEIFKSLEGWAEENLLVHLKPVEKCWQPQDYLPDPASEDFRDQVKEIQERAKEIPDDLYVVLVGDMITEEALPTYQTMLNTLDGAKDETGASPTSWAVWTRAWTAEENRHGDLLNKYLYLSGRVDMRSIEKTIQYLIGSGMDPRTENNPYLGFVYTSFQERATFVSHGNSARLAKEHGDLKMAQICGIIASDEKRHETAYTKIVEKLFEIDPDATVLAFADMMKKKISMPAHLMYDGRDDNLFDHFSAVAQRLGVYTAKDYADILEFLVGRWEVEKLTGLSSEGQKAQDYVCSLPPRIRRLEERARERAKQAPSMPFSWIFDRQVKL.

The segment covering 1-12 (MALNLNPVSTPF) has biased composition (polar residues). The transit peptide at 1–35 (MALNLNPVSTPFQCRRLPSFSPRQTPSRRSPKFFM) directs the protein to the chloroplast. The disordered stretch occupies residues 1–57 (MALNLNPVSTPFQCRRLPSFSPRQTPSRRSPKFFMASTLSSSSPKEAESLKKPFSPP). The Fe cation site is built by E141, E179, H182, E232, E265, and H268.

This sequence belongs to the fatty acid desaturase type 2 family. As to quaternary structure, homodimer. Requires Fe(2+) as cofactor.

The protein resides in the plastid. It localises to the chloroplast. It carries out the reaction octadecanoyl-[ACP] + 2 reduced [2Fe-2S]-[ferredoxin] + O2 + 2 H(+) = (9Z)-octadecenoyl-[ACP] + 2 oxidized [2Fe-2S]-[ferredoxin] + 2 H2O. The protein operates within lipid metabolism; fatty acid metabolism. Converts stearoyl-ACP to oleoyl-ACP by introduction of a cis double bond between carbons 9 and 10 of the acyl chain. The chain is Stearoyl-[acyl-carrier-protein] 9-desaturase, chloroplastic from Spinacia oleracea (Spinach).